A 447-amino-acid chain; its full sequence is Signal recognition particle 54 kDa protein (447 aa).

GTP is bound by residues G105–T112, D187–R191, and T247–D250.

The protein belongs to the GTP-binding SRP family. SRP54 subfamily. Part of the signal recognition particle protein translocation system, which is composed of SRP and FtsY. Archaeal SRP consists of a 7S RNA molecule of 300 nucleotides and two protein subunits: SRP54 and SRP19.

It is found in the cytoplasm. It catalyses the reaction GTP + H2O = GDP + phosphate + H(+). Involved in targeting and insertion of nascent membrane proteins into the cytoplasmic membrane. Binds to the hydrophobic signal sequence of the ribosome-nascent chain (RNC) as it emerges from the ribosomes. The SRP-RNC complex is then targeted to the cytoplasmic membrane where it interacts with the SRP receptor FtsY. The protein is Signal recognition particle 54 kDa protein of Hyperthermus butylicus (strain DSM 5456 / JCM 9403 / PLM1-5).